The primary structure comprises 220 residues: Sec-independent protein translocase protein TatB (220 aa).

A helical membrane pass occupies residues 1-21; the sequence is MFDIGFSELLLVLVIGLVVLG. The segment at 190 to 220 is disordered; it reads VTKQQIDTIDSHGTDLSSAGPSRIHQPGGDQ.

Belongs to the TatB family. The Tat system comprises two distinct complexes: a TatABC complex, containing multiple copies of TatA, TatB and TatC subunits, and a separate TatA complex, containing only TatA subunits. Substrates initially bind to the TatABC complex, which probably triggers association of the separate TatA complex to form the active translocon.

It localises to the cell inner membrane. Its function is as follows. Part of the twin-arginine translocation (Tat) system that transports large folded proteins containing a characteristic twin-arginine motif in their signal peptide across membranes. Together with TatC, TatB is part of a receptor directly interacting with Tat signal peptides. TatB may form an oligomeric binding site that transiently accommodates folded Tat precursor proteins before their translocation. In Yersinia pseudotuberculosis serotype I (strain IP32953), this protein is Sec-independent protein translocase protein TatB.